A 102-amino-acid chain; its full sequence is Protamine-2 (102 aa).

The segment at methionine 1 to histidine 102 is disordered. Residues serine 8, serine 10, and serine 37 each carry the phosphoserine modification. The segment covering serine 8 to tyrosine 17 has biased composition (basic and acidic residues). Basic and acidic residues predominate over residues glutamate 39–histidine 48. The span at glycine 49–histidine 102 shows a compositional bias: basic residues.

It belongs to the protamine P2 family. Interacts with TDRP. Proteolytic processing into mature chains is required for histone eviction during spermatogenesis. Transition proteins (TNP1 and TNP2) are required for processing. Testis.

It is found in the nucleus. The protein localises to the chromosome. Its function is as follows. Protamines substitute for histones in the chromatin of sperm during the haploid phase of spermatogenesis. They compact sperm DNA into a highly condensed, stable and inactive complex. The sequence is that of Protamine-2 (PRM2) from Gorilla gorilla gorilla (Western lowland gorilla).